Here is a 448-residue protein sequence, read N- to C-terminus: Zinc finger and BTB domain-containing protein 14 (448 aa).

A BTB domain is found at 36–102 (CDIAIVVEDV…MYTAKISVKK (67 aa)). The Nuclear localization signal motif lies at 50 to 66 (HRCVLAACSTYFKKLFK). Residues 130–193 (VSSPEENTQS…QEDGKSPTTT (64 aa)) are disordered. Residues 156-167 (DTQDDEVEEIGD) show a composition bias toward acidic residues. 5 C2H2-type zinc fingers span residues 275 to 302 (IVCQ…ADRP), 303 to 330 (FVCE…GYKP), 331 to 358 (YSCE…NERP), 359 to 386 (FACH…GEKP), and 387 to 415 (FVCG…ERKQ). The span at 404–415 (RHENNMHSERKQ) shows a compositional bias: basic and acidic residues. The segment at 404-425 (RHENNMHSERKQVTTANSIQSE) is disordered. Residues 416 to 425 (VTTANSIQSE) are compositionally biased toward polar residues.

The protein belongs to the krueppel C2H2-type zinc-finger protein family. As to quaternary structure, interacts with ZBTB21.

The protein localises to the nucleus. Functionally, transcriptional activator of the dopamine transporter (DAT), binding it's promoter at the consensus sequence 5'-CCTGCACAGTTCACGGA-3'. Binds to 5'-d(GCC)(n)-3' trinucleotide repeats in promoter regions and acts as a repressor of the FMR1 gene. Transcriptional repressor of MYC and thymidine kinase promoters. The protein is Zinc finger and BTB domain-containing protein 14 (ZBTB14) of Gallus gallus (Chicken).